A 561-amino-acid polypeptide reads, in one-letter code: Glycoprotein (561 aa).

Positions 1–30 are cleaved as a signal peptide; it reads MAHYELHVLFVHSWMLALILITTLVWLAAS. Residues 31–495 are Virion surface-facing; sequence QKAFTPDLVF…ISGFYDNLKL (465 aa). Disulfide bonds link C59-C327, C95-C128, C104-C150, C214-C261, and C256-C296. Residues 496–530 traverse the membrane as a helical segment; the sequence is YLILALIFVSLIALVVLDVIPFKYILFVLCPPLLL. At 531-561 the chain is on the intravirion side; sequence CRFIKCSRRKPETRDRYHVEYNRPGQVSSAF.

Belongs to the vesiculovirus glycoprotein family. As to quaternary structure, homotrimer. Glycosylated by host.

Its subcellular location is the virion membrane. The protein resides in the host membrane. Functionally, attaches the virus to host receptors, inducing clathrin-dependent endocytosis of the virion. Its function is as follows. In the endosome, the acidic pH induces conformational changes in the glycoprotein trimer, which trigger fusion between virus and endosomal membrane. This is Glycoprotein (G) from Drosophila melanogaster sigma virus (isolate Drosophila/USA/AP30/2005) (DMelSV).